Reading from the N-terminus, the 154-residue chain is Endoribonuclease YbeY (154 aa).

H113, H117, and H123 together coordinate Zn(2+).

It belongs to the endoribonuclease YbeY family. Zn(2+) serves as cofactor.

The protein resides in the cytoplasm. Single strand-specific metallo-endoribonuclease involved in late-stage 70S ribosome quality control and in maturation of the 3' terminus of the 16S rRNA. This is Endoribonuclease YbeY from Vibrio vulnificus (strain YJ016).